A 163-amino-acid chain; its full sequence is 3-isopropylmalate dehydratase small subunit 2 (163 aa).

Belongs to the LeuD family. LeuD type 2 subfamily. As to quaternary structure, heterodimer of LeuC and LeuD.

It catalyses the reaction (2R,3S)-3-isopropylmalate = (2S)-2-isopropylmalate. It functions in the pathway amino-acid biosynthesis; L-leucine biosynthesis; L-leucine from 3-methyl-2-oxobutanoate: step 2/4. Its function is as follows. Catalyzes the isomerization between 2-isopropylmalate and 3-isopropylmalate, via the formation of 2-isopropylmaleate. The protein is 3-isopropylmalate dehydratase small subunit 2 (leuD2) of Pyrococcus abyssi (strain GE5 / Orsay).